We begin with the raw amino-acid sequence, 649 residues long: Lipolysis-stimulated lipoprotein receptor (649 aa).

Residues 1-16 (MQQDGLGVGTRNGSGK) are compositionally biased toward gly residues. The tract at residues 1–21 (MQQDGLGVGTRNGSGKGRSVH) is disordered. Over 1–259 (MQQDGLGVGT…PGFQAGPIED (259 aa)) the chain is Extracellular. The region spanning 86–234 (PARAIQVTVS…DLQGNNEAYA (149 aa)) is the Ig-like V-type domain. A disulfide bond links Cys111 and Cys218. Residues 260-280 (WLFVVVVCLAAFLIFLLLGIC) form a helical membrane-spanning segment. The Cytoplasmic portion of the chain corresponds to 281-649 (WCQCCPHTCC…LALSRESLVV (369 aa)). A Phosphothreonine modification is found at Thr336. Residues Ser365, Ser371, Ser389, Ser432, and Ser436 each carry the phosphoserine modification. The segment at 414–649 (NFDPSRPGPP…LALSRESLVV (236 aa)) is disordered. Basic and acidic residues predominate over residues 426–444 (RVERAMSEVTSLHEDDWRS). Thr453 is modified (phosphothreonine). Phosphoserine occurs at positions 464, 467, and 493. At Thr501 the chain carries Phosphothreonine. A compositionally biased stretch (polar residues) spans 502-518 (PPSTAESGSRSPTSNGG). Ser528 and Ser530 each carry phosphoserine. Residues 529–565 (RSRDDLYDQDDSRDFPRSRDPHYDDFRSRERPPADPR) are compositionally biased toward basic and acidic residues. Tyr535 bears the Phosphotyrosine mark. Phosphoserine is present on residues Ser540 and Ser579. The span at 589-609 (RLLEEAVRKKGSEERRRPHKE) shows a compositional bias: basic and acidic residues. Ser631 carries the phosphoserine modification. Lys638 is covalently cross-linked (Glycyl lysine isopeptide (Lys-Gly) (interchain with G-Cter in ubiquitin)). Ser643 and Ser646 each carry phosphoserine.

It belongs to the immunoglobulin superfamily. LISCH7 family. In terms of assembly, homotrimer or homotetramer. Assembles into cell-cell contacts. Interacts (via the cytoplasmic domain) with MARVELD2 (via C-terminal cytoplasmic domain); the interaction is required to recruit MARVELD2 to tricellular contacts. Interacts with OCLN. Post-translationally, phosphorylation at Ser-365 by MAPK8/JNK1 and MAPK9/JNK2 may be required for exclusive localization at tricellular tight junstions. In terms of processing, polyubiquitinated at Lys-638 via 'Lys-63'-linked ubiquitin chains; deubiquitinated by USP53.

It localises to the cell membrane. It is found in the cell junction. Its subcellular location is the tight junction. Probable role in the clearance of triglyceride-rich lipoprotein from blood. Binds chylomicrons, LDL and VLDL in presence of free fatty acids and allows their subsequent uptake in the cells. Maintains epithelial barrier function by recruiting MARVELD2/tricellulin to tricellular tight junctions. This chain is Lipolysis-stimulated lipoprotein receptor, found in Homo sapiens (Human).